We begin with the raw amino-acid sequence, 370 residues long: Flagellar P-ring protein 1 (370 aa).

The N-terminal stretch at 1–25 (MSVLIKTRHCFVLLGLWLVLPTASA) is a signal peptide.

Belongs to the FlgI family. In terms of assembly, the basal body constitutes a major portion of the flagellar organelle and consists of four rings (L,P,S, and M) mounted on a central rod.

It is found in the periplasm. It localises to the bacterial flagellum basal body. Assembles around the rod to form the L-ring and probably protects the motor/basal body from shearing forces during rotation. The polypeptide is Flagellar P-ring protein 1 (Yersinia pestis).